The following is a 387-amino-acid chain: Intraflagellar transport protein 57 (387 aa).

It belongs to the IFT57 family.

The protein resides in the cell projection. It is found in the cilium. The protein localises to the flagellum. Its subcellular location is the cytoplasm. It localises to the cytoskeleton. The protein resides in the flagellum axoneme. It is found in the flagellum basal body. Component of the intraflagellar transport complex B (IFT-B) involved in flagellar assembly. The polypeptide is Intraflagellar transport protein 57 (Giardia intestinalis (strain ATCC 50803 / WB clone C6) (Giardia lamblia)).